We begin with the raw amino-acid sequence, 122 residues long: Large ribosomal subunit protein uL22 (122 aa).

The protein belongs to the universal ribosomal protein uL22 family. Part of the 50S ribosomal subunit.

This protein binds specifically to 23S rRNA; its binding is stimulated by other ribosomal proteins, e.g. L4, L17, and L20. It is important during the early stages of 50S assembly. It makes multiple contacts with different domains of the 23S rRNA in the assembled 50S subunit and ribosome. In terms of biological role, the globular domain of the protein is located near the polypeptide exit tunnel on the outside of the subunit, while an extended beta-hairpin is found that lines the wall of the exit tunnel in the center of the 70S ribosome. The protein is Large ribosomal subunit protein uL22 of Thermosynechococcus vestitus (strain NIES-2133 / IAM M-273 / BP-1).